We begin with the raw amino-acid sequence, 183 residues long: Pentapeptide repeat protein MfpA (183 aa).

Positions 113 to 147 constitute a Pentapeptide repeat domain; it reads SLVDTDLRKCVLRGADLSGARTTGARLDDADLRGA.

The protein belongs to the pentapeptide repeat protein family. In terms of assembly, homodimer. Probably interacts with DNA gyrase.

Its function is as follows. Might be involved in fluoroquinolone resistance. Inhibits ATP-independent DNA relaxation, ATP-dependent DNA supercoiling and ATP-dependent decatenation by endogenous gyrase, 50% inhibition occurs at 2 uM; inhibition is abolished if GyrA is mutated (Asp-87 to Gly or His). Also inhibits fluoroquinolone-promoted dsDNA cleavage. Increases fluoroquinolone (ciprofloxacin or moxifloxacin) inhibition of gyrase supercoiling activity in a concentration-dependent manner. Inhibits DNA relaxation and supercoiling by E.coli gyrase. Forms a structure that exhibits size, shape and electrostatic similarity to B-form DNA; it may bind to DNA gyrase which is postulated to protect it from fluoroquinolones. This is Pentapeptide repeat protein MfpA from Mycobacterium tuberculosis (strain ATCC 25618 / H37Rv).